The chain runs to 262 residues: Tryptophan synthase alpha chain (262 aa).

Residues E48 and D59 each act as proton acceptor in the active site.

Belongs to the TrpA family. In terms of assembly, tetramer of two alpha and two beta chains.

The enzyme catalyses (1S,2R)-1-C-(indol-3-yl)glycerol 3-phosphate + L-serine = D-glyceraldehyde 3-phosphate + L-tryptophan + H2O. Its pathway is amino-acid biosynthesis; L-tryptophan biosynthesis; L-tryptophan from chorismate: step 5/5. The alpha subunit is responsible for the aldol cleavage of indoleglycerol phosphate to indole and glyceraldehyde 3-phosphate. The polypeptide is Tryptophan synthase alpha chain (Helicobacter pylori (strain J99 / ATCC 700824) (Campylobacter pylori J99)).